The sequence spans 574 residues: Man(5)GlcNAc(2)-PP-dolichol translocation protein RFT1 (574 aa).

Residues 1–24 are Lumenal-facing; sequence MAKKNSQLPSTSEQILERSTTGAT. Residues 25 to 45 form a helical membrane-spanning segment; that stretch reads FLMMGQLFTKLVTFILNNLLI. Residues 46–48 lie on the Cytoplasmic side of the membrane; sequence RFL. The helical transmembrane segment at 49–69 threads the bilayer; that stretch reads SPRIFGITAFLEFIQGTVLFF. The Lumenal segment spans residues 70–110; the sequence is SRDAIRLSTLRISDSGNGIIDDDDEEEYQETHYKSKVLQTA. The chain crosses the membrane as a helical span at residues 111–131; the sequence is VNFAYIPFWIGFPLSIGLIAW. Residues 132-148 lie on the Cytoplasmic side of the membrane; sequence QYRNINAYFITLPFFRW. A helical membrane pass occupies residues 149–169; the sequence is SIFLIWLSIIVELLSEPFFIV. Residues 170-181 lie on the Lumenal side of the membrane; sequence NQFMLNYAARSR. A helical membrane pass occupies residues 182–202; sequence FESIAVTTGCIVNFIVVYAVQ. The Cytoplasmic portion of the chain corresponds to 203 to 218; the sequence is QSRYPMGVVTSDIDKE. The chain crosses the membrane as a helical span at residues 219-239; it reads GIAILAFALGKLAHSITLLAC. The Lumenal portion of the chain corresponds to 240-319; that stretch reads YYWDYLKNFK…INSLCTVEEQ (80 aa). The chain crosses the membrane as a helical span at residues 320-340; it reads GIYALLSNYGSLLTRLLFAPI. At 341–372 the chain is on the cytoplasmic side; the sequence is EESLRLFLARLLSSHNPKNLKLSIEVLVNLTR. Residues 373–393 form a helical membrane-spanning segment; sequence FYIYLSLMIIVFGPANSSFLL. The Lumenal segment spans residues 394-413; it reads QFLIGSKWSTTSVLDTIRVY. A helical membrane pass occupies residues 414–434; the sequence is CFYIPFLSLNGIFEAFFQSVA. Over 435 to 443 the chain is Cytoplasmic; the sequence is TGDQILKHS. A helical transmembrane segment spans residues 444-464; it reads YFMMAFSGIFLLNSWLLIEKL. The Lumenal segment spans residues 465–469; that stretch reads KLSIE. Residues 470-490 traverse the membrane as a helical segment; the sequence is GLILSNIINMVLRILYCGVFL. Topologically, residues 491-509 are cytoplasmic; sequence NKFHRELFTDSSFFFNFKD. The chain crosses the membrane as a helical span at residues 510 to 530; it reads FKTVIIAGSTICLLDWWFIGY. The Lumenal segment spans residues 531–532; that stretch reads VK. A helical transmembrane segment spans residues 533-553; sequence NLQQFVVNVLFAMGLLALILV. Topologically, residues 554–574 are cytoplasmic; the sequence is KERQTIQSFINKRAVSNSKDV.

The protein belongs to the RFT1 family.

Its subcellular location is the endoplasmic reticulum membrane. The protein operates within protein modification; protein glycosylation. Intramembrane glycolipid transporter that operates in the biosynthetic pathway of dolichol-linked oligosaccharides, the glycan precursors employed in protein asparagine (N)-glycosylation. The sequential addition of sugars to dolichol pyrophosphate produces dolichol-linked oligosaccharides containing fourteen sugars, including two GlcNAcs, nine mannoses and three glucoses. Once assembled, the oligosaccharide is transferred from the lipid to nascent proteins by oligosaccharyltransferases. The assembly of dolichol-linked oligosaccharides begins on the cytosolic side of the endoplasmic reticulum membrane and finishes in its lumen. RFT1 could mediate the translocation of the cytosolically oriented intermediate DolPP-GlcNAc2Man5, produced by ALG11, into the ER lumen where dolichol-linked oligosaccharides assembly continues. However, the intramembrane lipid transporter activity could not be confirmed in vitro. This is Man(5)GlcNAc(2)-PP-dolichol translocation protein RFT1 from Saccharomyces cerevisiae (strain ATCC 204508 / S288c) (Baker's yeast).